Here is a 63-residue protein sequence, read N- to C-terminus: Protein DsrB (63 aa).

Belongs to the DsrB family.

The polypeptide is Protein DsrB (Yersinia enterocolitica serotype O:8 / biotype 1B (strain NCTC 13174 / 8081)).